A 1036-amino-acid chain; its full sequence is PDZ domain-containing RING finger protein 4 (1036 aa).

An RING-type; degenerate zinc finger spans residues 18–56 (CKLCGQVLEEPLCTPCGHVFCASCLLPWAVRRRRCPLQC). Residues 129–160 (ARGGCGPTPRAGRGGGARGGPPGGRWGRGRGP) are compositionally biased toward gly residues. The interval 129 to 161 (ARGGCGPTPRAGRGGGARGGPPGGRWGRGRGPG) is disordered. 2 consecutive PDZ domains span residues 224-314 (TIVL…LRRT) and 402-486 (EVEL…VARP). Residues 515-590 (HNEAMQPTAN…SLKSKRDLGQ (76 aa)) form a disordered region. Positions 548–566 (NHEKDSGVGRTDESLRNDE) are enriched in basic and acidic residues. The stretch at 655–689 (NQGEQEGVEHELQLLNEELRNIELECQNIMQAHRL) forms a coiled coil. Basic and acidic residues predominate over residues 726 to 735 (EHPEKSDKDS). A disordered region spans residues 726–819 (EHPEKSDKDS…VLEGSKLPDQ (94 aa)). Residues 736–750 (SSAYNTAESCRSTPL) are compositionally biased toward polar residues. A compositionally biased stretch (low complexity) spans 774-799 (STMAATQSSSGQSSKESTSTKAKTTE). Over residues 805–819 (ESKEKVLEGSKLPDQ) the composition is skewed to basic and acidic residues.

The sequence is that of PDZ domain-containing RING finger protein 4 (PDZRN4) from Homo sapiens (Human).